Here is a 456-residue protein sequence, read N- to C-terminus: NADH oxidase (456 aa).

Position 10 (asparagine 10) interacts with FAD. The active-site Proton acceptor is histidine 11. FAD-binding residues include alanine 12, aspartate 34, glutamine 35, cysteine 44, valine 81, alanine 110, serine 113, lysine 143, and tyrosine 170. The Redox-active role is filled by cysteine 44. Residue cysteine 44 is modified to Cysteine sulfinic acid (-SO2H). Positions 171, 190, 199, and 254 each coordinate NAD(+). An FAD-binding site is contributed by aspartate 292. Residue alanine 308 participates in NAD(+) binding. Leucine 309, alanine 310, and serine 311 together coordinate FAD. Position 339 (glycine 339) interacts with NAD(+). Phenylalanine 436 is a binding site for FAD.

FAD serves as cofactor.

The enzyme catalyses 2 NADH + O2 + 2 H(+) = 2 NAD(+) + 2 H2O. Its function is as follows. Catalyzes the four-electron reduction of molecular oxygen to water. This is NADH oxidase from Streptococcus pyogenes serotype M6 (strain ATCC BAA-946 / MGAS10394).